Here is a 1342-residue protein sequence, read N- to C-terminus: DNA-directed RNA polymerase subunit beta (1342 aa).

The protein belongs to the RNA polymerase beta chain family. The RNAP catalytic core consists of 2 alpha, 1 beta, 1 beta' and 1 omega subunit. When a sigma factor is associated with the core the holoenzyme is formed, which can initiate transcription.

The enzyme catalyses RNA(n) + a ribonucleoside 5'-triphosphate = RNA(n+1) + diphosphate. In terms of biological role, DNA-dependent RNA polymerase catalyzes the transcription of DNA into RNA using the four ribonucleoside triphosphates as substrates. The sequence is that of DNA-directed RNA polymerase subunit beta from Salmonella gallinarum (strain 287/91 / NCTC 13346).